Here is a 227-residue protein sequence, read N- to C-terminus: MVNTMTWHDVLAEEKEKPYFRNTLARVAAERAAGKTVYPPQTDVFNAFRLTELGGVKVVILGQDPYHGPNQAHGLAFSVLPGVPVPPSLVNMYKELVTDIPGFERPNHGFLESWARQGVMLLNTVLTVEAGQAHSHVKFGWETFTDNVIAAINQHREGVVFLLWGAHAQKKGSIIDRKRHHVLHAPHPSPLSAHRGFFGSAHFSQANRWLTEHGESAIDWMPQLPAR.

Asp64 (proton acceptor) is an active-site residue.

The protein belongs to the uracil-DNA glycosylase (UDG) superfamily. UNG family.

It localises to the cytoplasm. It catalyses the reaction Hydrolyzes single-stranded DNA or mismatched double-stranded DNA and polynucleotides, releasing free uracil.. Functionally, excises uracil residues from the DNA which can arise as a result of misincorporation of dUMP residues by DNA polymerase or due to deamination of cytosine. The polypeptide is Uracil-DNA glycosylase (Erwinia tasmaniensis (strain DSM 17950 / CFBP 7177 / CIP 109463 / NCPPB 4357 / Et1/99)).